The sequence spans 151 residues: Copper transporter 2 (151 aa).

2 consecutive transmembrane segments (helical) span residues 42 to 62 and 97 to 117; these read GARG…AVLL and VAYL…LAIV.

This sequence belongs to the copper transporter (Ctr) (TC 1.A.56) family. SLC31A subfamily. Self-interacts. Interacts with SWEET11 and COPT1.

Its subcellular location is the cell membrane. In terms of biological role, involved in the transport of copper, in cooperation with SWEET11 and COPT1. Contributes to the removal of copper (Cu) from xylem, and thus to the sensitivity toward bacterial pathogens such as X.oryzae pv. oryzae (Xoo). The protein is Copper transporter 2 (COPT2) of Oryza sativa subsp. japonica (Rice).